The chain runs to 390 residues: Glucose-fructose oxidoreductase domain-containing protein 1 (390 aa).

The N-terminal stretch at 1–21 (MLPGVGVFGTSLTSRVIIPLL) is a signal peptide. N161, N270, and N354 each carry an N-linked (GlcNAc...) asparagine glycan.

The protein belongs to the Gfo/Idh/MocA family. In terms of assembly, homodimer.

It localises to the secreted. Its function is as follows. Probably catalytically inactive enzyme. Does not bind NAD or NADP. This Xenopus tropicalis (Western clawed frog) protein is Glucose-fructose oxidoreductase domain-containing protein 1 (gfod1).